The chain runs to 1277 residues: Y' element ATP-dependent helicase YEL077C (1277 aa).

In terms of domain architecture, Helicase ATP-binding spans 222–399 (EIYMADTPSV…LQRIGLTGLA (178 aa)). Residue 235 to 242 (APPGYGKT) participates in ATP binding. Residues 345-348 (DEFH) carry the DEAH box motif. The 152-residue stretch at 454 to 605 (ALKLLLALFE…EFYGLESKKG (152 aa)) folds into the Helicase C-terminal domain. Disordered regions lie at residues 696-763 (NVRT…NATT) and 775-895 (TTKS…NRFH). Over residues 775-878 (TTKSINSSTN…ATTTESTNAS (104 aa)) the composition is skewed to low complexity. Over residues 879-895 (AKEDANKDGNAEDNRFH) the composition is skewed to basic and acidic residues.

Belongs to the helicase family. Yeast subtelomeric Y' repeat subfamily.

Functionally, catalyzes DNA unwinding and is involved in telomerase-independent telomere maintenance. This chain is Y' element ATP-dependent helicase YEL077C, found in Saccharomyces cerevisiae (strain ATCC 204508 / S288c) (Baker's yeast).